A 427-amino-acid polypeptide reads, in one-letter code: Trigger factor (427 aa).

Residues 163–248 (GDTVVIDFVG…VHEVKAKEVP (86 aa)) form the PPIase FKBP-type domain.

The protein belongs to the FKBP-type PPIase family. Tig subfamily.

Its subcellular location is the cytoplasm. The catalysed reaction is [protein]-peptidylproline (omega=180) = [protein]-peptidylproline (omega=0). Involved in protein export. Acts as a chaperone by maintaining the newly synthesized protein in an open conformation. Functions as a peptidyl-prolyl cis-trans isomerase. The sequence is that of Trigger factor from Streptococcus equi subsp. zooepidemicus (strain MGCS10565).